We begin with the raw amino-acid sequence, 275 residues long: Elongation factor Ts (275 aa).

The segment at 76 to 79 (TDFV) is involved in Mg(2+) ion dislocation from EF-Tu.

Belongs to the EF-Ts family.

The protein localises to the cytoplasm. Functionally, associates with the EF-Tu.GDP complex and induces the exchange of GDP to GTP. It remains bound to the aminoacyl-tRNA.EF-Tu.GTP complex up to the GTP hydrolysis stage on the ribosome. The chain is Elongation factor Ts from Corynebacterium glutamicum (strain R).